The following is a 316-amino-acid chain: Ester hydrolase C11orf54 homolog (316 aa).

3 residues coordinate Zn(2+): histidine 267, histidine 269, and histidine 279.

Monomer. The cofactor is Zn(2+).

It is found in the nucleus. It localises to the cytoplasm. In terms of biological role, exhibits ester hydrolase activity on the substrate p-nitrophenyl acetate, in vitro. May regulate DNA damage and repair by regulating HIF1A degradation via chaperone-mediated autophagy (CMA). The polypeptide is Ester hydrolase C11orf54 homolog (Xenopus laevis (African clawed frog)).